The sequence spans 173 residues: Putative MgpC-like protein MPN_092 (173 aa).

Belongs to the MgpC family.

This chain is Putative MgpC-like protein MPN_092, found in Mycoplasma pneumoniae (strain ATCC 29342 / M129 / Subtype 1) (Mycoplasmoides pneumoniae).